Consider the following 298-residue polypeptide: ATP phosphoribosyltransferase (298 aa).

The protein belongs to the ATP phosphoribosyltransferase family. Long subfamily. It depends on Mg(2+) as a cofactor.

The protein resides in the cytoplasm. It carries out the reaction 1-(5-phospho-beta-D-ribosyl)-ATP + diphosphate = 5-phospho-alpha-D-ribose 1-diphosphate + ATP. Its pathway is amino-acid biosynthesis; L-histidine biosynthesis; L-histidine from 5-phospho-alpha-D-ribose 1-diphosphate: step 1/9. With respect to regulation, feedback inhibited by histidine. Its function is as follows. Catalyzes the condensation of ATP and 5-phosphoribose 1-diphosphate to form N'-(5'-phosphoribosyl)-ATP (PR-ATP). Has a crucial role in the pathway because the rate of histidine biosynthesis seems to be controlled primarily by regulation of HisG enzymatic activity. The polypeptide is ATP phosphoribosyltransferase (hisG) (Photobacterium profundum (strain SS9)).